A 1224-amino-acid polypeptide reads, in one-letter code: MRLKDISKTATLAWSPRGVNDNQALLALGGYTGTEGSKNSDTLLELWNENPESQKPVGSIDVKTRFYDLAWEKSLDKPMGVIAGSLEDGGIGFWDPAAILKSDEASASIATYKSENGSILGPLDFNRLQPNLLASGDNKGDVWVWDIKHPQQPFALPKQNRSSEVHVVSWNNKVSHILASGNATEYTTVWDVKLKRQVLNLSYLGAAGVSAATGAVNSIAWHPNNATRLATAIDDNRNPIILTWDLRQPTVPQNILTGHQKAALSLSWCPEDPTFLLSSGKDGRAMVWNVETGESLGSFPRSGNWYTKSSWCPSNSNRVAVASLEGKVSIFSIQSTNTDKSQEASIKGATSIDDNEFFNNLPSIAGSQEPSFSLPLAPKWFKVPVGARFGFPNKIVSFSPNSKEVTITSAPDEVEQDEAKSFHSSAKFQTEKEITDFCQKGVEESASEEEAINWKLLMAVSKRASRSKFAELLGYKTLKPKNDEDDSKVDESVAKDSTTPNELSKNANNENYDDDSSFYGKLAESVQEVSIADKKDAEIVKDSFKIFNPEDSDLEKNITEALLTGDVLSAVKACLEEKKISEALFLSTFGGKECRKCVRDAFYELQEHKPSYMRLSACIADNDLQNVVDNAEVSEWKDIFVFICTYATDDEFAPLCSTLGQRLEDLEDEKSIRSAEFCYIASKSLQSYANLWLKQLATSTKTSKAASAYGAYVEQLTKLMDKVSMFRSIVVYKDDELSATKDWKLAGLYEVYIAYAKILSASGKFDDAMSYLNLVPTEFPGAKEEIQRLTMLLEPHAVPPIHQIKQTGYAPVQPKTSQASSILPTVPRTTSYTSPYATTSSHITPADVHPLPPPSTSTTAGWNDAPMLGQLPMRRAAPSMAPVRSPFPGASSAQPAAMSRTSSVSTLPPPPPTASMTASAPAIASPPPPKVGETYHPPTASGTRVPPVQQPSHPNPYTPVAPQSPVAAASRISSSPNMPPSNPYTPIAVASSTVNPAHTYKPHGGSQIVPPPKQPANRVVPLPPTASQRASAYEPPTVSVPSPSALSPSVTPQLPPVSSRLPPVSATRPQIPQPPPVSTALPSSSAVSRPPIATSAGRSSTAASTSAPLTYPAGDRSHIPGNLRPIYEMLNAELQRVSQSLPPQMSRVVHDTEKRLNMLFDRLNSNVLSKPLTDELLALATSLNAHDYQTASNIQTNIVTTLGDQCEHWIVGVTRLITLSKSTT.

7 WD repeats span residues 18-57 (GVND…QKPV), 61-104 (DVKT…KSDE), 114-155 (SENG…QPFA), 160-200 (NRSS…QVLN), 211-254 (AATG…VPQN), 258-300 (GHQK…GSFP), and 302-341 (SGNW…TDKS). One copy of the WD 8; interaction with sec13 repeat lies at 388 to 410 (RFGFPNKIVSFSPNSKEVTITSA). Disordered regions lie at residues 480–512 (PKND…NENY), 840–866 (SSHI…NDAP), and 879–1116 (SMAP…AGDR). A compositionally biased stretch (polar residues) spans 495–510 (KDSTTPNELSKNANNE). Position 499 is a phosphothreonine (Thr-499). 4 stretches are compositionally biased toward low complexity: residues 914-923 (ASMTASAPAI), 960-976 (VAPQ…SSSP), 1035-1065 (PPTV…PPVS), and 1093-1107 (ATSA…STSA). 2 positions are modified to phosphoserine: Ser-1042 and Ser-1044.

Belongs to the WD repeat SEC31 family. As to quaternary structure, the COPII coat is composed of at least 5 proteins: the sec23/24 complex, the sec13/31 complex, and the protein sar1. sec13 and sec31 make a 2:2 tetramer that forms the edge element of the COPII outer coat. The tetramer self-assembles in multiple copies to form the complete polyhedral cage. Interacts (via WD 8) with sec13.

Its subcellular location is the cytoplasmic vesicle. It localises to the COPII-coated vesicle membrane. The protein resides in the endoplasmic reticulum membrane. Component of the coat protein complex II (COPII) which promotes the formation of transport vesicles from the endoplasmic reticulum (ER). The coat has two main functions, the physical deformation of the endoplasmic reticulum membrane into vesicles and the selection of cargo molecules. In Schizosaccharomyces pombe (strain 972 / ATCC 24843) (Fission yeast), this protein is Protein transport protein sec31 (sec31).